A 356-amino-acid chain; its full sequence is Peptide chain release factor 1 (356 aa).

Glutamine 233 is subject to N5-methylglutamine.

The protein belongs to the prokaryotic/mitochondrial release factor family. Post-translationally, methylated by PrmC. Methylation increases the termination efficiency of RF1.

Its subcellular location is the cytoplasm. Its function is as follows. Peptide chain release factor 1 directs the termination of translation in response to the peptide chain termination codons UAG and UAA. This Shouchella clausii (strain KSM-K16) (Alkalihalobacillus clausii) protein is Peptide chain release factor 1.